The primary structure comprises 336 residues: HTH-type transcriptional regulator SyrM (336 aa).

The HTH lysR-type domain occupies 41–98; that stretch reads IDLNLLVALEALLEYRNVTHAGQHIGRSQPAMSRALGRLRGLFNDDLLVRSSTGLIPT. Positions 58-77 form a DNA-binding region, H-T-H motif; the sequence is VTHAGQHIGRSQPAMSRALG.

The protein belongs to the LysR transcriptional regulatory family.

Its function is as follows. Acts in trans to stimulate nod gene expression via nodD3 and exo gene expression via SyrA. The chain is HTH-type transcriptional regulator SyrM (syrM) from Rhizobium etli.